The following is a 435-amino-acid chain: Hydrogenobyrinate a,c-diamide synthase (435 aa).

A GATase cobBQ-type domain is found at 239–422 (RIGVARDASF…IHFYLPSNPQ (184 aa)). The active-site Nucleophile is the Cys321.

It belongs to the CobB/CbiA family. It depends on Mg(2+) as a cofactor.

The enzyme catalyses hydrogenobyrinate + 2 L-glutamine + 2 ATP + 2 H2O = hydrogenobyrinate a,c-diamide + 2 L-glutamate + 2 ADP + 2 phosphate + 2 H(+). Its pathway is cofactor biosynthesis; adenosylcobalamin biosynthesis; cob(II)yrinate a,c-diamide from precorrin-2 (aerobic route): step 9/10. Functionally, catalyzes the ATP-dependent amidation of the two carboxylate groups at positions a and c of hydrogenobyrinate, using either L-glutamine or ammonia as the nitrogen source. The polypeptide is Hydrogenobyrinate a,c-diamide synthase (Pseudomonas aeruginosa (strain ATCC 15692 / DSM 22644 / CIP 104116 / JCM 14847 / LMG 12228 / 1C / PRS 101 / PAO1)).